Reading from the N-terminus, the 355-residue chain is Methionine import ATP-binding protein MetN 1 (355 aa).

Residues 6 to 245 enclose the ABC transporter domain; that stretch reads IDLKDIAVTF…PKAPLTVDFV (240 aa). 42–49 is an ATP binding site; the sequence is GYSGAGKS.

The protein belongs to the ABC transporter superfamily. Methionine importer (TC 3.A.1.24) family. In terms of assembly, the complex is composed of two ATP-binding proteins (MetN), two transmembrane proteins (MetI) and a solute-binding protein (MetQ).

It localises to the cell membrane. It catalyses the reaction L-methionine(out) + ATP + H2O = L-methionine(in) + ADP + phosphate + H(+). It carries out the reaction D-methionine(out) + ATP + H2O = D-methionine(in) + ADP + phosphate + H(+). In terms of biological role, part of the ABC transporter complex MetNIQ involved in methionine import. Responsible for energy coupling to the transport system. The protein is Methionine import ATP-binding protein MetN 1 of Lactiplantibacillus plantarum (strain ATCC BAA-793 / NCIMB 8826 / WCFS1) (Lactobacillus plantarum).